We begin with the raw amino-acid sequence, 183 residues long: Peptide deformylase (183 aa).

2 residues coordinate Fe cation: cysteine 110 and histidine 153. Residue glutamate 154 is part of the active site. Histidine 157 is a Fe cation binding site.

This sequence belongs to the polypeptide deformylase family. It depends on Fe(2+) as a cofactor.

It carries out the reaction N-terminal N-formyl-L-methionyl-[peptide] + H2O = N-terminal L-methionyl-[peptide] + formate. In terms of biological role, removes the formyl group from the N-terminal Met of newly synthesized proteins. Requires at least a dipeptide for an efficient rate of reaction. N-terminal L-methionine is a prerequisite for activity but the enzyme has broad specificity at other positions. This Shouchella clausii (strain KSM-K16) (Alkalihalobacillus clausii) protein is Peptide deformylase.